The following is a 237-amino-acid chain: Segregation and condensation protein A (237 aa).

This sequence belongs to the ScpA family. Component of a cohesin-like complex composed of ScpA, ScpB and the Smc homodimer, in which ScpA and ScpB bind to the head domain of Smc. The presence of the three proteins is required for the association of the complex with DNA.

The protein resides in the cytoplasm. In terms of biological role, participates in chromosomal partition during cell division. May act via the formation of a condensin-like complex containing Smc and ScpB that pull DNA away from mid-cell into both cell halves. This is Segregation and condensation protein A from Streptococcus thermophilus (strain CNRZ 1066).